Reading from the N-terminus, the 207-residue chain is Tereporin-Ts1 (207 aa).

The first 11 residues, 1–11 (VIFALVLGNAS), serve as a signal peptide directing secretion. Residues 35–54 (SAGTSLASTILSGLAASGYR) form an N-terminal region region. Phosphocholine contacts are provided by G111, S129, P131, Y164, and Y165.

The protein belongs to the actinoporin family. Conoidea subfamily. In terms of assembly, octamer or nonamer in membranes. Monomer in the soluble state. In terms of tissue distribution, expressed by the venom duct.

It localises to the secreted. The protein resides in the nematocyst. The protein localises to the target cell membrane. In terms of biological role, pore-forming protein that forms pores of around 1 nm and causes cardiac stimulation and cytolysis. In Terebra subulata (Chocolate spotted auger), this protein is Tereporin-Ts1.